The sequence spans 92 residues: Putative pterin-4-alpha-carbinolamine dehydratase (92 aa).

It belongs to the pterin-4-alpha-carbinolamine dehydratase family.

It carries out the reaction (4aS,6R)-4a-hydroxy-L-erythro-5,6,7,8-tetrahydrobiopterin = (6R)-L-erythro-6,7-dihydrobiopterin + H2O. In Cereibacter sphaeroides (strain ATCC 17023 / DSM 158 / JCM 6121 / CCUG 31486 / LMG 2827 / NBRC 12203 / NCIMB 8253 / ATH 2.4.1.) (Rhodobacter sphaeroides), this protein is Putative pterin-4-alpha-carbinolamine dehydratase.